We begin with the raw amino-acid sequence, 181 residues long: HGPRTase-like protein 2 (181 aa).

Belongs to the purine/pyrimidine phosphoribosyltransferase family. Archaeal HPRT subfamily.

Functionally, may catalyze a purine salvage reaction, the substrate is unknown. In Haloquadratum walsbyi (strain DSM 16854 / JCM 12705 / C23), this protein is HGPRTase-like protein 2.